We begin with the raw amino-acid sequence, 549 residues long: Glucose-6-phosphate isomerase (549 aa).

The active-site Proton donor is the Glu353. Residues His384 and Lys510 contribute to the active site.

The protein belongs to the GPI family.

Its subcellular location is the cytoplasm. It catalyses the reaction alpha-D-glucose 6-phosphate = beta-D-fructose 6-phosphate. Its pathway is carbohydrate biosynthesis; gluconeogenesis. It functions in the pathway carbohydrate degradation; glycolysis; D-glyceraldehyde 3-phosphate and glycerone phosphate from D-glucose: step 2/4. Its function is as follows. Catalyzes the reversible isomerization of glucose-6-phosphate to fructose-6-phosphate. This Mycolicibacterium smegmatis (strain ATCC 700084 / mc(2)155) (Mycobacterium smegmatis) protein is Glucose-6-phosphate isomerase.